Reading from the N-terminus, the 3623-residue chain is Cubilin (3623 aa).

A signal peptide spans 1 to 20 (MSSQFLWGFVTLLMIAELDG). Residues 21-32 (KTGKPEQRGQKR) constitute a propeptide, removed in mature form. Residues 39 to 46 (PRMTTEEG) are interaction with AMN. Asparagine 95 carries an N-linked (GlcNAc...) asparagine glycan. Residues 129 to 165 (ERKVCSSNPCLNGGTCVNLHDSFVCICPSQWKGLFCS) form the EGF-like 1 domain. Intrachain disulfides connect cysteine 133-cysteine 144, cysteine 138-cysteine 153, cysteine 155-cysteine 164, cysteine 171-cysteine 187, cysteine 181-cysteine 196, cysteine 198-cysteine 207, cysteine 264-cysteine 277, cysteine 271-cysteine 286, and cysteine 289-cysteine 300. The EGF-like 2; calcium-binding domain occupies 167 to 208 (DVNECVVYSGTPFGCQSGSTCVNTVGSFRCDCTPDTYGPQCA). An EGF-like 3; calcium-binding domain is found at 260 to 301 (DKDECSLQPSPCSEHAQCFNTQGSFYCGACPKGWQGNGYECQ). One can recognise an EGF-like 4; calcium-binding domain in the interval 302-345 (DINECEINNGGCSQAPLVPCLNTPGSFSCGNCPAGFSGDGRVCT). 2 consecutive EGF-like domains span residues 346–385 (PVDI…YTGN) and 395–430 (LSNI…QNCT). Cystine bridges form between cysteine 350–cysteine 363, cysteine 357–cysteine 376, cysteine 399–cysteine 409, cysteine 404–cysteine 418, cysteine 420–cysteine 429, cysteine 436–cysteine 447, cysteine 441–cysteine 456, cysteine 458–cysteine 467, cysteine 474–cysteine 500, cysteine 527–cysteine 549, cysteine 590–cysteine 616, cysteine 643–cysteine 665, and cysteine 708–cysteine 734. Asparagine 428 is a glycosylation site (N-linked (GlcNAc...) asparagine). Residues 432–468 (NINDCSSNPCLNGGTCIDGINGFTCDCTSSWTGYYCQ) form the EGF-like 7; calcium-binding domain. CUB domains lie at 474 to 586 (CGGI…WEAK), 590 to 702 (CGGI…YLTT), 708 to 816 (CGGN…YQVA), 817 to 928 (CGGM…FSSD), 932 to 1042 (CGEV…YEAI), 1048 to 1161 (CLYD…WDGS), 1165 to 1277 (CGGN…FRQR), 1278 to 1389 (CDNV…WFTH), 1391 to 1506 (CGGE…WRAV), 1510 to 1619 (CGGI…FREE), 1620 to 1734 (CGGR…YSAS), 1738 to 1850 (CGGS…FKNI), 1852 to 1963 (GNNN…WFAV), 1978 to 2091 (CGGF…FHKS), 2092 to 2213 (CGGY…YEAK), 2217 to 2334 (CGGT…YSIA), 2336 to 2448 (CGGT…FKSS), 2452 to 2565 (CGGD…YTST), 2570 to 2687 (CGGF…YSFT), 2689 to 2801 (CGGI…WTTN), 2805 to 2919 (CGGT…FISR), 2920 to 3035 (CGRT…YRAI), 3037 to 3150 (CGGI…FRET), 3157 to 3274 (CGGY…YTFV), 3278 to 3393 (CGGT…YQIA), 3395 to 3507 (CNRE…WTSS), and 3511 to 3623 (CGGT…MWSS). An N-linked (GlcNAc...) asparagine glycan is attached at asparagine 491. Residues asparagine 711 and asparagine 749 are each glycosylated (N-linked (GlcNAc...) asparagine). Cysteine 761 and cysteine 779 are joined by a disulfide. N-linked (GlcNAc...) asparagine glycosylation occurs at asparagine 781. Cysteines 817 and 842 form a disulfide. Asparagine 857 is a glycosylation site (N-linked (GlcNAc...) asparagine). Cystine bridges form between cysteine 869/cysteine 891 and cysteine 932/cysteine 958. Asparagine 957 carries an N-linked (GlcNAc...) asparagine glycan. Ca(2+) is bound at residue glutamate 980. A glycan (N-linked (GlcNAc...) asparagine) is linked at asparagine 984. The cysteines at positions 985 and 1005 are disulfide-linked. Residues aspartate 988, aspartate 1027, and leucine 1030 each contribute to the Ca(2+) site. Cysteine 1048 and cysteine 1074 are joined by a disulfide. Ca(2+) contacts are provided by glutamate 1096, aspartate 1105, and aspartate 1146. Cysteines 1165 and 1191 form a disulfide. Asparagine 1168 carries N-linked (GlcNAc...) asparagine glycosylation. Residues glutamate 1213, aspartate 1221, aspartate 1262, glycine 1264, and glutamine 1265 each coordinate Ca(2+). Cysteine 1218 and cysteine 1240 are disulfide-bonded. Cysteine 1278 and cysteine 1306 are disulfide-bonded. N-linked (GlcNAc...) asparagine glycosylation is found at asparagine 1285, asparagine 1307, and asparagine 1319. A Ca(2+)-binding site is contributed by glutamate 1328. Asparagine 1332 carries N-linked (GlcNAc...) asparagine glycosylation. Cysteines 1333 and 1351 form a disulfide. Residues aspartate 1336, aspartate 1373, and isoleucine 1375 each coordinate Ca(2+). Cystine bridges form between cysteine 1391-cysteine 1417 and cysteine 1444-cysteine 1466. A glycan (N-linked (GlcNAc...) asparagine) is linked at asparagine 1500. A disulfide bridge connects residues cysteine 1510 and cysteine 1536. Residues asparagine 1551, asparagine 1646, and asparagine 1671 are each glycosylated (N-linked (GlcNAc...) asparagine). A disulfide bridge connects residues cysteine 1620 and cysteine 1647. 3 disulfide bridges follow: cysteine 1675/cysteine 1697, cysteine 1738/cysteine 1764, and cysteine 1791/cysteine 1812. Asparagine 1802 and asparagine 1819 each carry an N-linked (GlcNAc...) asparagine glycan. Cystine bridges form between cysteine 1905–cysteine 1927, cysteine 1978–cysteine 2006, and cysteine 2032–cysteine 2054. Residues asparagine 2085 and asparagine 2117 are each glycosylated (N-linked (GlcNAc...) asparagine). 2 cysteine pairs are disulfide-bonded: cysteine 2092–cysteine 2118 and cysteine 2217–cysteine 2247. N-linked (GlcNAc...) asparagine glycosylation is present at asparagine 2274. Cystine bridges form between cysteine 2275/cysteine 2297, cysteine 2336/cysteine 2363, cysteine 2390/cysteine 2411, cysteine 2452/cysteine 2478, and cysteine 2505/cysteine 2527. A glycan (N-linked (GlcNAc...) asparagine) is linked at asparagine 2400. Asparagine 2531, asparagine 2581, and asparagine 2610 each carry an N-linked (GlcNAc...) asparagine glycan. A disulfide bridge links cysteine 2570 with cysteine 2599. Cystine bridges form between cysteine 2628-cysteine 2649, cysteine 2689-cysteine 2715, cysteine 2742-cysteine 2764, cysteine 2805-cysteine 2831, cysteine 2860-cysteine 2883, cysteine 2920-cysteine 2946, and cysteine 2977-cysteine 2999. N-linked (GlcNAc...) asparagine glycosylation is found at asparagine 2813, asparagine 2875, asparagine 2945, and asparagine 2989. Position 3008 is a phosphothreonine (threonine 3008). 2 disulfide bridges follow: cysteine 3037–cysteine 3064 and cysteine 3091–cysteine 3113. N-linked (GlcNAc...) asparagine glycosylation is found at asparagine 3042, asparagine 3106, asparagine 3125, and asparagine 3165. Intrachain disulfides connect cysteine 3157–cysteine 3185 and cysteine 3215–cysteine 3237. Residues asparagine 3268, asparagine 3283, and asparagine 3290 are each glycosylated (N-linked (GlcNAc...) asparagine). 2 disulfide bridges follow: cysteine 3278/cysteine 3306 and cysteine 3332/cysteine 3354. N-linked (GlcNAc...) asparagine glycans are attached at residues asparagine 3357, asparagine 3400, and asparagine 3430. Cysteine 3395 and cysteine 3421 are oxidised to a cystine. Intrachain disulfides connect cysteine 3448-cysteine 3470, cysteine 3511-cysteine 3537, and cysteine 3564-cysteine 3586. A glycan (N-linked (GlcNAc...) asparagine) is linked at asparagine 3533.

As to quaternary structure, interacts with AMN. Component of the cubam complex composed of one CUBN trimer and one AMN chain. The cubam complex can dimerize. Interacts with LRP2 in a dual-receptor complex in a calcium-dependent manner. Found in a complex with PID1/PCLI1, LRP1 and CUBNI. Interacts with LRP1 and PID1/PCLI1. Post-translationally, the precursor is cleaved by a trans-Golgi proteinase furin, removing a propeptide. N-glycosylated. As to expression, expressed to intestinal, renal and yalk sac apical membranes. In kidney, expressed in the proximal tubule.

It localises to the cell membrane. It is found in the endosome membrane. Its subcellular location is the lysosome membrane. Endocytic receptor which plays a role in lipoprotein, vitamin and iron metabolism by facilitating their uptake. Acts together with LRP2 to mediate endocytosis of high-density lipoproteins, GC, hemoglobin, ALB, TF and SCGB1A1. Acts together with AMN to mediate endocytosis of the CBLIF-cobalamin complex. Binds to ALB, MB, Kappa and lambda-light chains, TF, hemoglobin, GC, SCGB1A1, APOA1, high density lipoprotein, and the CBLIF-cobalamin complex. Ligand binding requires calcium. Serves as important transporter in several absorptive epithelia, including intestine, renal proximal tubules and embryonic yolk sac. May play an important role in the development of the peri-implantation embryo through internalization of APOA1 and cholesterol. Binds to LGALS3 at the maternal-fetal interface. The sequence is that of Cubilin (Cubn) from Rattus norvegicus (Rat).